A 187-amino-acid polypeptide reads, in one-letter code: Meiotically up-regulated protein C1442.13c (187 aa).

2 disordered regions span residues 15–46 and 119–145; these read QWEN…LSNE and IQEG…PAIN. Over residues 26–41 the composition is skewed to basic residues; it reads PPRKPKIVQPKKKPSK. The region spanning 145–187 is the G-patch domain; sequence NNGKGKQLLEMMGWSRGKGLGSENQGMVDPVVAVVKNNKQGLH.

It localises to the nucleus. It is found in the cytoplasm. The protein resides in the cytoskeleton. The protein localises to the microtubule organizing center. Its subcellular location is the spindle pole body. Functionally, has a role in meiosis and sporulation. Required for meiotic chromosome segregation. The polypeptide is Meiotically up-regulated protein C1442.13c (Schizosaccharomyces pombe (strain 972 / ATCC 24843) (Fission yeast)).